A 144-amino-acid chain; its full sequence is Large ribosomal subunit protein uL16 (144 aa).

Residues 1 to 19 (MLLPKRVKYRRQHRPKTTG) are compositionally biased toward basic residues. The interval 1–23 (MLLPKRVKYRRQHRPKTTGRSKG) is disordered.

It belongs to the universal ribosomal protein uL16 family. Part of the 50S ribosomal subunit.

Functionally, binds 23S rRNA and is also seen to make contacts with the A and possibly P site tRNAs. The chain is Large ribosomal subunit protein uL16 from Staphylococcus carnosus (strain TM300).